Reading from the N-terminus, the 917-residue chain is Protein translocase subunit SecA 1 (917 aa).

Residues Q87, 105 to 109 (GEGKT), and D507 contribute to the ATP site. The segment at 866–917 (EKSPESIGEDIEGREHPQKHQPFVRQGEKIGRNDPCPCGSGKKYKQCHGKLN) is disordered. Residues C901, C903, C912, and H913 each coordinate Zn(2+). Residues 907-917 (KKYKQCHGKLN) show a composition bias toward basic residues.

Belongs to the SecA family. Monomer and homodimer. Part of the essential Sec protein translocation apparatus which comprises SecA, SecYEG and auxiliary proteins SecDF-YajC and YidC. The cofactor is Zn(2+).

Its subcellular location is the cell inner membrane. The protein resides in the cytoplasm. The enzyme catalyses ATP + H2O + cellular proteinSide 1 = ADP + phosphate + cellular proteinSide 2.. Functionally, part of the Sec protein translocase complex. Interacts with the SecYEG preprotein conducting channel. Has a central role in coupling the hydrolysis of ATP to the transfer of proteins into and across the cell membrane, serving both as a receptor for the preprotein-SecB complex and as an ATP-driven molecular motor driving the stepwise translocation of polypeptide chains across the membrane. This Nitrosospira multiformis (strain ATCC 25196 / NCIMB 11849 / C 71) protein is Protein translocase subunit SecA 1.